A 767-amino-acid chain; its full sequence is ABC transporter B family member 4 (767 aa).

The interval 81 to 104 is disordered; that stretch reads NYSSSSNSGNNNNNNYNNKNNNNN. The next 5 membrane-spanning stretches (helical) occupy residues 208 to 228, 252 to 272, 324 to 344, 350 to 370, and 429 to 449; these read IWLFGFGIITAFFSSWVGLQI, AIFILLAQAGLNFLYSTMISV, VSLGVKSFGQIVGGVISLILI, LGMMTILPTMVSVGTFYAGWL, and IGIFQGVTSLALNSVSLLVYW. The region spanning 211 to 491 is the ABC transmembrane type-1 domain; it reads FGFGIITAFF…LSILFTQIMS (281 aa). Positions 524–760 constitute an ABC transporter domain; the sequence is IKFINVDFKY…KGLYYKLVQR (237 aa). 559-566 is an ATP binding site; the sequence is GSSGGGKS.

This sequence belongs to the ABC transporter superfamily. ABCB family. Multidrug resistance exporter (TC 3.A.1.201) subfamily.

The protein localises to the membrane. The protein is ABC transporter B family member 4 (abcB4) of Dictyostelium discoideum (Social amoeba).